The sequence spans 360 residues: Dual-specificity RNA methyltransferase RlmN (360 aa).

The active-site Proton acceptor is the glutamate 93. The Radical SAM core domain maps to 99–326; sequence EEDRNTLCIS…VITRSSRGAD (228 aa). Cysteine 106 and cysteine 331 are disulfide-bonded. 3 residues coordinate [4Fe-4S] cluster: cysteine 113, cysteine 117, and cysteine 120. S-adenosyl-L-methionine is bound by residues 158–159, serine 190, 212–214, and asparagine 288; these read GE and SLN. Cysteine 331 functions as the S-methylcysteine intermediate in the catalytic mechanism.

This sequence belongs to the radical SAM superfamily. RlmN family. [4Fe-4S] cluster is required as a cofactor.

Its subcellular location is the cytoplasm. It carries out the reaction adenosine(2503) in 23S rRNA + 2 reduced [2Fe-2S]-[ferredoxin] + 2 S-adenosyl-L-methionine = 2-methyladenosine(2503) in 23S rRNA + 5'-deoxyadenosine + L-methionine + 2 oxidized [2Fe-2S]-[ferredoxin] + S-adenosyl-L-homocysteine. The enzyme catalyses adenosine(37) in tRNA + 2 reduced [2Fe-2S]-[ferredoxin] + 2 S-adenosyl-L-methionine = 2-methyladenosine(37) in tRNA + 5'-deoxyadenosine + L-methionine + 2 oxidized [2Fe-2S]-[ferredoxin] + S-adenosyl-L-homocysteine. Specifically methylates position 2 of adenine 2503 in 23S rRNA and position 2 of adenine 37 in tRNAs. m2A2503 modification seems to play a crucial role in the proofreading step occurring at the peptidyl transferase center and thus would serve to optimize ribosomal fidelity. This is Dual-specificity RNA methyltransferase RlmN from Geobacter sulfurreducens (strain ATCC 51573 / DSM 12127 / PCA).